The primary structure comprises 152 residues: MGLSTLEQKLTEIISAPVEALGYELVGIEFIRGRQSTLRIYIDSDDGITVDACADVSHQVSAVLDVEDPITVAYNLEVSSPGLERPMFTAEHYTRYLGEEVTLVLRMAMQNRRKWQGIIKAVDGEMITVTVDGKDEVFALSNIQKANLVPHF.

The protein belongs to the RimP family.

It localises to the cytoplasm. Its function is as follows. Required for maturation of 30S ribosomal subunits. The protein is Ribosome maturation factor RimP of Yersinia enterocolitica serotype O:8 / biotype 1B (strain NCTC 13174 / 8081).